We begin with the raw amino-acid sequence, 428 residues long: Glutamate-1-semialdehyde 2,1-aminomutase (428 aa).

Lysine 265 bears the N6-(pyridoxal phosphate)lysine mark.

This sequence belongs to the class-III pyridoxal-phosphate-dependent aminotransferase family. HemL subfamily. As to quaternary structure, homodimer. The cofactor is pyridoxal 5'-phosphate.

The protein localises to the cytoplasm. The enzyme catalyses (S)-4-amino-5-oxopentanoate = 5-aminolevulinate. It functions in the pathway porphyrin-containing compound metabolism; protoporphyrin-IX biosynthesis; 5-aminolevulinate from L-glutamyl-tRNA(Glu): step 2/2. This Shewanella loihica (strain ATCC BAA-1088 / PV-4) protein is Glutamate-1-semialdehyde 2,1-aminomutase.